Reading from the N-terminus, the 92-residue chain is Small ribosomal subunit protein uS17 (92 aa).

It belongs to the universal ribosomal protein uS17 family. In terms of assembly, part of the 30S ribosomal subunit.

In terms of biological role, one of the primary rRNA binding proteins, it binds specifically to the 5'-end of 16S ribosomal RNA. This is Small ribosomal subunit protein uS17 from Corynebacterium diphtheriae (strain ATCC 700971 / NCTC 13129 / Biotype gravis).